The following is a 762-amino-acid chain: MTTIKTSNLGFPRIGLNREWKKALEAYWKGSTDKDTFLKQIDELFLSAVKTQIDQQIDVVPVSDFTQYDHVLDTAVSFNWIPKRFRHLTDATDTYFAIARGIKDAVSSEMTKWFNTNYHYIVPEYDESIEFRLTRNKQLEDYRRIKQEYGVETKPVIVGPYTFVTLAKGYEPSEAKAIQKRLVPLYVQLLKELEEEGVKWVQIDEPALVTASSEDVRGAKELFESITSELSSLNVLLQTYFDSVDAYEELISYPVQGIGLDFVHDKGRNLEQLKTHGFPTDKVLAAGVIDGRNIWKADLEERLDAVLDILSIAKVDELWIQPSSSLLHVPVAKHPDEHLEKDLLNGLSYAKEKLAELTALKEGLVSGKAAISEEIQQAKADIQALKQFATGANSEQKKELEQLTDKDFKRPIPFEERLALQNESLGLPLLPTTTIGSFPQSAEVRSARQKWRKAEWSDEQYQNFINAETKRWIDIQEELELDVLVHGEFERTDMVEYFGEKLAGFAFTKYAWVQSYGSRCVRPPVIYGDVEFIEPMTVKDTVYAQSLTSKHVKGMLTGPVTILNWSFPRNDISRKEIAFQIGLALRKEVKALEDAGIQIIQVDEPALREGLPLKTRDWDEYLTWAAEAFRLTTSSVKNETQIHTHMCYSNFEDIVDTINDLDADVITIEHSRSHGGFLDYLKNHPYLKGLGLGVYDIHSPRVPSTEEMYNIIVDALAVCPTDRFWVNPDCGLKTRQQEETVAALKNMVEAAKQARAQQTQLV.

5-methyltetrahydropteroyltri-L-glutamate-binding positions include 18 to 21 (REWK) and K112. L-homocysteine is bound by residues 435–437 (IGS) and E488. Residues 435–437 (IGS) and E488 each bind L-methionine. Residues 519-520 (RC) and W565 each bind 5-methyltetrahydropteroyltri-L-glutamate. D603 provides a ligand contact to L-homocysteine. D603 serves as a coordination point for L-methionine. A 5-methyltetrahydropteroyltri-L-glutamate-binding site is contributed by E609. 3 residues coordinate Zn(2+): H645, C647, and E669. H698 acts as the Proton donor in catalysis. C719 carries the post-translational modification S-bacillithiol cysteine disulfide. Zn(2+) is bound at residue C730.

The protein belongs to the vitamin-B12 independent methionine synthase family. Requires Zn(2+) as cofactor. In response to oxidative stress, Cys-719 can react with bacillithiol (BSH) to form mixed disulfides. S-bacillithiolation leads to loss of catalytic activity and methionine auxotrophy.

It catalyses the reaction 5-methyltetrahydropteroyltri-L-glutamate + L-homocysteine = tetrahydropteroyltri-L-glutamate + L-methionine. It functions in the pathway amino-acid biosynthesis; L-methionine biosynthesis via de novo pathway; L-methionine from L-homocysteine (MetE route): step 1/1. In terms of biological role, catalyzes the transfer of a methyl group from 5-methyltetrahydrofolate to homocysteine resulting in methionine formation. The polypeptide is 5-methyltetrahydropteroyltriglutamate--homocysteine methyltransferase (Bacillus subtilis (strain 168)).